The primary structure comprises 437 residues: Inactive peptidyl-prolyl cis-trans isomerase shutdown (437 aa).

A PPIase FKBP-type domain is found at 92-178 (DSEVTIHYAA…RPEPALFVIV (87 aa)). TPR repeat units follow at residues 209–242 (VNAL…LRLS), 258–294 (VNAY…EKHC), and 295–327 (KALY…EPKN).

The protein belongs to the FKBP6 family. In terms of assembly, interacts with Hsp83.

It is found in the cytoplasm. Co-chaperone required during oogenesis to repress transposable elements and prevent their mobilization, which is essential for the germline integrity. Acts via the piRNA metabolic process, which mediates the repression of transposable elements during meiosis by forming complexes composed of piRNAs and Piwi proteins and govern the methylation and subsequent repression of transposons. Acts as a co-chaperone via its interaction with Hsp83/HSP90 and is required for the biogenesis of all three piRNA major populations. In Bombyx mori (Silk moth), this protein is Inactive peptidyl-prolyl cis-trans isomerase shutdown (shu).